The primary structure comprises 315 residues: DNA-directed RNA polymerase subunit alpha (315 aa).

Residues 1–228 form an alpha N-terminal domain (alpha-NTD) region; that stretch reads MAQFQIECVE…DLFNPLKDIS (228 aa). Residues 238–315 are alpha C-terminal domain (alpha-CTD); that stretch reads IPDDPTAQIP…LPQERSSKHS (78 aa).

It belongs to the RNA polymerase alpha chain family. In terms of assembly, in cyanobacteria the RNAP catalytic core is composed of 2 alpha, 1 beta, 1 beta', 1 gamma and 1 omega subunit. When a sigma factor is associated with the core the holoenzyme is formed, which can initiate transcription.

The enzyme catalyses RNA(n) + a ribonucleoside 5'-triphosphate = RNA(n+1) + diphosphate. DNA-dependent RNA polymerase catalyzes the transcription of DNA into RNA using the four ribonucleoside triphosphates as substrates. This chain is DNA-directed RNA polymerase subunit alpha, found in Trichormus variabilis (strain ATCC 29413 / PCC 7937) (Anabaena variabilis).